The sequence spans 795 residues: Lon protease (795 aa).

A Lon N-terminal domain is found at 17–214 (YPLMPLRDIV…KVYKFLQDEI (198 aa)). Residue 370–377 (GPPGVGKT) coordinates ATP. The region spanning 605 to 787 (KPLVGVATGL…EEVFKIALVR (183 aa)) is the Lon proteolytic domain. Active-site residues include Ser-692 and Lys-735.

The protein belongs to the peptidase S16 family. Homohexamer. Organized in a ring with a central cavity.

The protein resides in the cytoplasm. The enzyme catalyses Hydrolysis of proteins in presence of ATP.. In terms of biological role, ATP-dependent serine protease that mediates the selective degradation of mutant and abnormal proteins as well as certain short-lived regulatory proteins. Required for cellular homeostasis and for survival from DNA damage and developmental changes induced by stress. Degrades polypeptides processively to yield small peptide fragments that are 5 to 10 amino acids long. Binds to DNA in a double-stranded, site-specific manner. The protein is Lon protease of Aquifex aeolicus (strain VF5).